Here is a 287-residue protein sequence, read N- to C-terminus: Outer membrane protein TP0453 (287 aa).

The first 24 residues, 1–24, serve as a signal peptide directing secretion; sequence MIRRRYRGCTQGAWIVSVGMLFAS. Cysteine 25 carries the N-palmitoyl cysteine lipid modification. Cysteine 25 carries S-diacylglycerol cysteine lipidation. 9 amphipathic helix regions span residues 36–40, 56–63, 69–77, 103–112, 155–162, 172–179, 194–202, 240–250, and 270–279; these read PLGVV, ENLISRII, KADIKKIVD, YAFTNLIFSR, MSKMLSRL, PRFEKECT, GGHFITKLL, FPIQFLISRVL, and AERLASVISS.

As to quaternary structure, a mix of monomer and dimers; may integrate into the membrane as a dimer. Palmitoylated upon expression of a fusion protein with first 46 residues fused to PhoA in E.coli.

Its subcellular location is the cell outer membrane. Its function is as follows. Might be involved in ligand transport, alters membrane permeability at acidic pH (4.0 to 5.5). Incubation of the non-lipidated form with lipid vesicles increases their permeability. This chain is Outer membrane protein TP0453, found in Treponema pallidum (strain Nichols).